The following is a 413-amino-acid chain: S-adenosylmethionine synthase (413 aa).

His15 contributes to the ATP binding site. Asp17 lines the Mg(2+) pocket. Glu43 contacts K(+). Glu56 and Gln100 together coordinate L-methionine. Residues 100–110 (QSPDISQGVNE) form a flexible loop region. ATP contacts are provided by residues 171-173 (DGK), 248-249 (KF), Asp257, 263-264 (RK), Ala280, and Lys284. Asp257 lines the L-methionine pocket. Lys288 serves as a coordination point for L-methionine.

The protein belongs to the AdoMet synthase family. In terms of assembly, homotetramer; dimer of dimers. It depends on Mg(2+) as a cofactor. The cofactor is K(+).

Its subcellular location is the cytoplasm. The enzyme catalyses L-methionine + ATP + H2O = S-adenosyl-L-methionine + phosphate + diphosphate. Its pathway is amino-acid biosynthesis; S-adenosyl-L-methionine biosynthesis; S-adenosyl-L-methionine from L-methionine: step 1/1. Catalyzes the formation of S-adenosylmethionine (AdoMet) from methionine and ATP. The overall synthetic reaction is composed of two sequential steps, AdoMet formation and the subsequent tripolyphosphate hydrolysis which occurs prior to release of AdoMet from the enzyme. The chain is S-adenosylmethionine synthase from Prochlorococcus marinus (strain AS9601).